Here is a 335-residue protein sequence, read N- to C-terminus: MQFIDRSEIEVEGGRGGDGMVAYRREKYVPAGGPAGGDGGHGGAVVLEATANLQTLLDFKYRHRFEADDGTKGGPKNLTGAKGKDLVIAVPCGTVVQDAVTGETIGDLTEPGQRLVVAVGGRGGHGNTHFASNQNRAPDYATEGRLGQQRKLLLELKLLAEVGIIGLPNAGKSTLISVLSAARPRIADYPFTTLVPNLGVVRKVTGDGVVFADIPGLIEGAHQGVGLGHEFLRHIERTRVLVQLIALDSADPLADYRTVIDELGRYGRELLHKSRIVALNKADVCLPEEAEHWRRILSTETGEPVLVISAAARSNLDALLARVWQVLEAPQGVTT.

The 159-residue stretch at 1-159 (MQFIDRSEIE…RKLLLELKLL (159 aa)) folds into the Obg domain. The region spanning 160–328 (AEVGIIGLPN…LLARVWQVLE (169 aa)) is the OBG-type G domain. GTP is bound by residues 166–173 (GLPNAGKS), 191–195 (FTTLV), 213–216 (DIPG), 280–283 (NKAD), and 309–311 (SAA). The Mg(2+) site is built by serine 173 and threonine 193.

The protein belongs to the TRAFAC class OBG-HflX-like GTPase superfamily. OBG GTPase family. In terms of assembly, monomer. Mg(2+) serves as cofactor.

The protein resides in the cytoplasm. Functionally, an essential GTPase which binds GTP, GDP and possibly (p)ppGpp with moderate affinity, with high nucleotide exchange rates and a fairly low GTP hydrolysis rate. Plays a role in control of the cell cycle, stress response, ribosome biogenesis and in those bacteria that undergo differentiation, in morphogenesis control. In Gloeobacter violaceus (strain ATCC 29082 / PCC 7421), this protein is GTPase Obg.